Consider the following 214-residue polypeptide: MNNLKRLTKTIFSCFTLSALLLLAGCETLPPMTDLSPITVTDARQATAWELQGKLAIKTPDDKLSANIYWRHSEDRDELTLTTMLGTTVLTLNSTPNSAHLHIDGKDFRDDNAQRLLERVSGWSIPLADLPLWITGQVGPNDQVIARDSQGKPKQLTNTQTPPPWQVAFLSWQSQSGASVPHQLKLERGDLQLKLQLNQWQALGKPAILVGEQP.

The N-terminal stretch at 1-25 is a signal peptide; sequence MNNLKRLTKTIFSCFTLSALLLLAG. Cysteine 26 carries N-palmitoyl cysteine lipidation. Cysteine 26 carries S-diacylglycerol cysteine lipidation.

The protein belongs to the LolB family. In terms of assembly, monomer.

It localises to the cell outer membrane. Its function is as follows. Plays a critical role in the incorporation of lipoproteins in the outer membrane after they are released by the LolA protein. This chain is Outer-membrane lipoprotein LolB, found in Shewanella baltica (strain OS155 / ATCC BAA-1091).